A 189-amino-acid polypeptide reads, in one-letter code: Interferon alpha-C (189 aa).

A signal peptide spans 1 to 23 (MAPAWSFRLALLLLSCNAICSLG). Cystine bridges form between Cys24-Cys122 and Cys52-Cys162.

Belongs to the alpha/beta interferon family.

The protein resides in the secreted. In terms of biological role, produced by macrophages, IFN-alpha have antiviral activities. Interferon stimulates the production of two enzymes: a protein kinase and an oligoadenylate synthetase. This chain is Interferon alpha-C (IFNAC), found in Bos taurus (Bovine).